The following is a 173-amino-acid chain: Trafficking regulator of GLUT4 1 (173 aa).

Residues 1-10 are compositionally biased toward pro residues; that stretch reads MANPAQPPLQ. The tract at residues 1–20 is disordered; sequence MANPAQPPLQDPGSTSPLEL. At 1 to 102 the chain is on the cytoplasmic side; sequence MANPAQPPLQ…QDQEAPKDYL (102 aa). 6 positions are modified to phosphoserine: Ser-16, Ser-43, Ser-45, Ser-70, Ser-84, and Ser-85. Residues 103–123 constitute an intramembrane region (helical); sequence VLAIASCFCPVWPLNLIPLIF. Residues 124–150 are Cytoplasmic-facing; the sequence is SIMSRSSVQQGDLDGARRLGRLARLLS. The chain crosses the membrane as a helical span at residues 151–171; sequence ITFIILGIVIIIVAVTVNFTV. The Extracellular portion of the chain corresponds to 172–173; the sequence is PK.

The protein belongs to the CD225/Dispanin family. In terms of assembly, interacts with SLC2A4; the interaction is required for proper SLC2A4 reacycling after insulin stimulation. In terms of tissue distribution, expressed specifically in white and brown adipose tissues.

It is found in the cell membrane. The protein resides in the endomembrane system. The protein localises to the cytoplasm. It localises to the perinuclear region. Its function is as follows. Regulates insulin-mediated adipose tissue glucose uptake and transport by modulation of SLC2A4 recycling. Not required for SLC2A4 membrane fusion upon an initial stimulus, but rather is necessary for proper protein recycling during prolonged insulin stimulation. The sequence is that of Trafficking regulator of GLUT4 1 (Trarg1) from Mus musculus (Mouse).